A 226-amino-acid polypeptide reads, in one-letter code: Cytidylate kinase (226 aa).

10-18 (GPASSGKST) provides a ligand contact to ATP.

Belongs to the cytidylate kinase family. Type 1 subfamily.

It localises to the cytoplasm. The enzyme catalyses CMP + ATP = CDP + ADP. The catalysed reaction is dCMP + ATP = dCDP + ADP. The protein is Cytidylate kinase of Streptococcus equi subsp. zooepidemicus (strain MGCS10565).